Consider the following 372-residue polypeptide: NAD(P)H-quinone oxidoreductase subunit 1 (372 aa).

9 helical membrane passes run 27–47 (AIWM…GVLV), 65–85 (PEYI…KLVF), 97–117 (WLFT…YLIV), 128–148 (IGTG…GLLM), 166–186 (AAQS…IVMM), 204–224 (ILGW…IAAL), 266–286 (VLSA…PIPI), 308–328 (ALGI…AILL), and 347–367 (FLLP…LAFP).

This sequence belongs to the complex I subunit 1 family. In terms of assembly, NDH-1 is composed of at least 11 different subunits.

It localises to the cellular thylakoid membrane. The catalysed reaction is a plastoquinone + NADH + (n+1) H(+)(in) = a plastoquinol + NAD(+) + n H(+)(out). The enzyme catalyses a plastoquinone + NADPH + (n+1) H(+)(in) = a plastoquinol + NADP(+) + n H(+)(out). NDH-1 shuttles electrons from an unknown electron donor, via FMN and iron-sulfur (Fe-S) centers, to quinones in the respiratory and/or the photosynthetic chain. The immediate electron acceptor for the enzyme in this species is believed to be plastoquinone. Couples the redox reaction to proton translocation, and thus conserves the redox energy in a proton gradient. This chain is NAD(P)H-quinone oxidoreductase subunit 1, found in Trichormus variabilis (strain ATCC 29413 / PCC 7937) (Anabaena variabilis).